A 563-amino-acid polypeptide reads, in one-letter code: Endoglucanase B (563 aa).

The or 31 signal peptide spans 1–27; it reads MKKFLVLLIALIMIATLLVVPGVQTSA. The Proton donor role is filled by E204. E363 (nucleophile) is an active-site residue. The interval 476-495 is disordered; it reads SVTPSPSATPSPTTITAPPT. Residues 496-562 form the Dockerin domain; it reads DTVTYGDVNG…VLRSISELPY (67 aa).

This sequence belongs to the glycosyl hydrolase 5 (cellulase A) family.

The enzyme catalyses Endohydrolysis of (1-&gt;4)-beta-D-glucosidic linkages in cellulose, lichenin and cereal beta-D-glucans.. Its function is as follows. This enzyme catalyzes the endohydrolysis of 1,4-beta-glucosidic linkages in cellulose, lichenin and cereal beta-D-glucans. The protein is Endoglucanase B (celB) of Acetivibrio thermocellus (strain ATCC 27405 / DSM 1237 / JCM 9322 / NBRC 103400 / NCIMB 10682 / NRRL B-4536 / VPI 7372) (Clostridium thermocellum).